A 352-amino-acid chain; its full sequence is Probable RNA methyltransferase Mpe_A3613 (352 aa).

Glu88 acts as the Proton acceptor in catalysis. The region spanning 91 to 317 is the Radical SAM core domain; the sequence is LLPRDGLCVS…TKLRRSAGQD (227 aa). A disulfide bond links Cys98 and Cys322. Residues Cys105, Cys109, and Cys112 each contribute to the [4Fe-4S] cluster site. Residues 150 to 151, Ser180, 203 to 205, and Asn279 contribute to the S-adenosyl-L-methionine site; these read GE and SLH. Cys322 serves as the catalytic S-methylcysteine intermediate.

This sequence belongs to the radical SAM superfamily. RlmN family. [4Fe-4S] cluster serves as cofactor.

It localises to the cytoplasm. This chain is Probable RNA methyltransferase Mpe_A3613, found in Methylibium petroleiphilum (strain ATCC BAA-1232 / LMG 22953 / PM1).